The sequence spans 297 residues: Protoheme IX farnesyltransferase (297 aa).

9 consecutive transmembrane segments (helical) span residues 16-36 (VVAL…PGVP), 45-65 (VLGF…NQLL), 93-113 (VFAS…VNLI), 114-134 (TAVL…VYLK), 141-161 (IVIG…AVTG), 172-192 (SLLV…LAIF), 223-243 (VVLA…AFYL), 244-264 (GGAI…LDPP), and 277-297 (IVYL…LPWL).

It belongs to the UbiA prenyltransferase family. Protoheme IX farnesyltransferase subfamily.

The protein resides in the cell inner membrane. It catalyses the reaction heme b + (2E,6E)-farnesyl diphosphate + H2O = Fe(II)-heme o + diphosphate. It functions in the pathway porphyrin-containing compound metabolism; heme O biosynthesis; heme O from protoheme: step 1/1. In terms of biological role, converts heme B (protoheme IX) to heme O by substitution of the vinyl group on carbon 2 of heme B porphyrin ring with a hydroxyethyl farnesyl side group. The protein is Protoheme IX farnesyltransferase of Stenotrophomonas maltophilia (strain R551-3).